Here is a 517-residue protein sequence, read N- to C-terminus: GMP synthase [glutamine-hydrolyzing] (517 aa).

The Glutamine amidotransferase type-1 domain occupies lysine 11–asparagine 202. Residue cysteine 88 is the Nucleophile of the active site. Active-site residues include histidine 176 and glutamate 178. In terms of domain architecture, GMPS ATP-PPase spans tryptophan 203–arginine 392. Position 230–236 (serine 230–serine 236) interacts with ATP.

In terms of assembly, homodimer.

It catalyses the reaction XMP + L-glutamine + ATP + H2O = GMP + L-glutamate + AMP + diphosphate + 2 H(+). The protein operates within purine metabolism; GMP biosynthesis; GMP from XMP (L-Gln route): step 1/1. In terms of biological role, catalyzes the synthesis of GMP from XMP. The polypeptide is GMP synthase [glutamine-hydrolyzing] (Lactobacillus johnsonii (strain CNCM I-12250 / La1 / NCC 533)).